Here is a 273-residue protein sequence, read N- to C-terminus: MTFLKKLEHAWSASQSLLQVGLDPDPKRFPRELEGKPDAIFQFCRDIVDATAPYACSFKPQIAYFAAHRAEDQLEALCQHIRAQHPDLPIVLDAKRGDIGSTAENYAREAFERYQAHALTVSPYMGLDSVEPYLAWGDRGVIVLCRTSNPGGSDLQFLKMADGQPLYLHVAGLVADKWNANGQCGLVVGATFPNELAAVRQRIGDAVPLLVPGIGAQGGDINATVQAGANSAGAGMMINSSRAILYASTGEDWRQAAGEAARGLRDAINAVRT.

Lysine 95 serves as the catalytic Proton donor.

Belongs to the OMP decarboxylase family. Type 2 subfamily.

It catalyses the reaction orotidine 5'-phosphate + H(+) = UMP + CO2. It functions in the pathway pyrimidine metabolism; UMP biosynthesis via de novo pathway; UMP from orotate: step 2/2. The sequence is that of Orotidine 5'-phosphate decarboxylase from Bordetella bronchiseptica (strain ATCC BAA-588 / NCTC 13252 / RB50) (Alcaligenes bronchisepticus).